A 420-amino-acid polypeptide reads, in one-letter code: Tyrosine-protein phosphatase non-receptor type 20 (420 aa).

A compositionally biased stretch (basic and acidic residues) spans 1–11 (MSSPRDFRAEP). Disordered stretches follow at residues 1-47 (MSSP…VFEN) and 68-108 (DVFE…SQAL). Residues 31–41 (LPSSSQENTPR) show a composition bias toward polar residues. Phosphoserine occurs at positions 76 and 120. One can recognise a Tyrosine-protein phosphatase domain in the interval 159–412 (IMQEFMALEL…HFCYDIVLEV (254 aa)). Substrate contacts are provided by residues Asp-323, 353–359 (CSAGIGR), and Gln-397. Catalysis depends on Cys-353, which acts as the Phosphocysteine intermediate.

It belongs to the protein-tyrosine phosphatase family. Non-receptor class subfamily. As to expression, present in many cell lines (at protein level). Widely expressed.

The protein localises to the nucleus. The protein resides in the cytoplasm. Its subcellular location is the cytoskeleton. It is found in the microtubule organizing center. It localises to the centrosome. The enzyme catalyses O-phospho-L-tyrosyl-[protein] + H2O = L-tyrosyl-[protein] + phosphate. Its function is as follows. Tyrosine-protein phosphatase targeted to sites of actin polymerization in response of varied extracellular stimuli. Has tyrosine phosphatase activity towards various tyrosyl phosphorylated substrates. The polypeptide is Tyrosine-protein phosphatase non-receptor type 20 (Homo sapiens (Human)).